The chain runs to 351 residues: MDYKSGLIPDGNAMENLEKQLICPICLEMFTKPVVILPCQHNLCRKCANDIFQAANPYWTNRGGSVSMSGGRFRCPSCRHEVIMDRHGVYGLQRNLLVENIIDIYKQECSSRPLQKGSHPMCKEHEDEKINIYCLTCEVPTCSLCKVFGAHQACEVAPLQSIFQGQKTELSNCISMLVAGNDRVQTIISQLEDSCRVTKENSHQVKEELSHKFDALYAILDEKKSELLQRITQEQEEKLDFIEALILQYREQLEKSTKLVETAIQSLDEPGGATFLLSAKPLIKSIVEASKGCQLGKTEQGFENMDYFTLNLEHIAEALRAIDFGTDEEEEFTEEEEEEDQEEGVSTEGHQ.

Residues 23 to 79 (CPICLEMFTKPVVILPCQHNLCRKCANDIFQAANPYWTNRGGSVSMSGGRFRCPSCR) form an RING-type zinc finger. Residues 74-218 (RCPSCRHEVI…LSHKFDALYA (145 aa)) are interaction with TTN. The B box-type zinc finger occupies 117–159 (GSHPMCKEHEDEKINIYCLTCEVPTCSLCKVFGAHQACEVAPL). Residues cysteine 122, histidine 125, cysteine 145, and histidine 151 each coordinate Zn(2+). Residues 189–269 (SQLEDSCRVT…VETAIQSLDE (81 aa)) are a coiled coil. Positions 267–325 (LDEPGGATFLLSAKPLIKSIVEASKGCQLGKTEQGFENMDYFTLNLEHIAEALRAIDFG) constitute a COS domain. Over residues 326–345 (TDEEEEFTEEEEEEDQEEGV) the composition is skewed to acidic residues. The segment at 326–351 (TDEEEEFTEEEEEEDQEEGVSTEGHQ) is disordered.

As to quaternary structure, homodimer. Homooligomer and heterooligomer. Interacts with SUMO2, titin/TTN and GMEB1. Interacts with TRIM54 and probably with TRIM55 and TNNI3. Forms a ternary complex with RACK1 and PRKCE. Interacts with CKM. Muscle specific. Selectively expressed in heart and skeletal muscle.

The protein resides in the cytoplasm. The protein localises to the nucleus. It localises to the myofibril. It is found in the sarcomere. Its subcellular location is the m line. The protein resides in the z line. The catalysed reaction is S-ubiquitinyl-[E2 ubiquitin-conjugating enzyme]-L-cysteine + [acceptor protein]-L-lysine = [E2 ubiquitin-conjugating enzyme]-L-cysteine + N(6)-ubiquitinyl-[acceptor protein]-L-lysine.. The protein operates within protein modification; protein ubiquitination. In terms of biological role, E3 ubiquitin ligase. Mediates the ubiquitination and subsequent proteasomal degradation of CKM, GMEB1 and HIBADH. Regulates the proteasomal degradation of muscle proteins under amino acid starvation, where muscle protein is catabolized to provide other organs with amino acids. Inhibits de novo skeletal muscle protein synthesis under amino acid starvation. Regulates proteasomal degradation of cardiac troponin I/TNNI3 and probably of other sarcomeric-associated proteins. May play a role in striated muscle atrophy and hypertrophy by regulating an anti-hypertrophic PKC-mediated signaling pathway. May regulate the organization of myofibrils through TTN in muscle cells. This Rattus norvegicus (Rat) protein is E3 ubiquitin-protein ligase TRIM63 (Trim63).